The following is a 282-amino-acid chain: Transcription repressor MYB4 (282 aa).

HTH myb-type domains lie at 9-61 (KAHT…INYL) and 62-116 (RPDL…RRKL). DNA-binding regions (H-T-H motif) lie at residues 37–61 (WRSL…INYL) and 89–112 (WSLI…NTHI). Positions 119 to 145 (RGIDPTSHRPIQESSASQDSKPTQLEP) are disordered. Polar residues predominate over residues 130-145 (QESSASQDSKPTQLEP).

As to quaternary structure, interacts with BHLH12/MYC1 and BHLH42/TT8. Interacts with SAD2. As to expression, widely expressed at low level. Highly expressed in siliques. Weakly expressed in seedlings, young and mature leaves, cauline leaves, stems, flower buds and roots.

The protein localises to the nucleus. Its function is as follows. Transcription repressor involved in regulation of protection against UV. Mediates transcriptional repression of CYP73A5, the gene encoding trans-cinnamate 4-monooxygenase, thereby regulating the accumulation of the UV-protectant compound sinapoylmalate. The polypeptide is Transcription repressor MYB4 (MYB4) (Arabidopsis thaliana (Mouse-ear cress)).